We begin with the raw amino-acid sequence, 186 residues long: Ribosome-recycling factor (186 aa).

The protein belongs to the RRF family.

The protein resides in the cytoplasm. Responsible for the release of ribosomes from messenger RNA at the termination of protein biosynthesis. May increase the efficiency of translation by recycling ribosomes from one round of translation to another. The polypeptide is Ribosome-recycling factor (Bartonella bacilliformis (strain ATCC 35685 / KC583 / Herrer 020/F12,63)).